The following is a 463-amino-acid chain: Cysteine--tRNA ligase (463 aa).

Position 30 (C30) interacts with Zn(2+). Residues 32–42 carry the 'HIGH' region motif; it reads MTVYDYCHVGH. Residues C214, H239, and E243 each contribute to the Zn(2+) site. The 'KMSKS' region signature appears at 271 to 275; the sequence is KMSKS. An ATP-binding site is contributed by K274.

Belongs to the class-I aminoacyl-tRNA synthetase family. Monomer. Requires Zn(2+) as cofactor.

The protein resides in the cytoplasm. It catalyses the reaction tRNA(Cys) + L-cysteine + ATP = L-cysteinyl-tRNA(Cys) + AMP + diphosphate. This Ralstonia pickettii (strain 12J) protein is Cysteine--tRNA ligase.